We begin with the raw amino-acid sequence, 269 residues long: MERYENLFAQLNVRREGAFVPFVTLGDPGIEQSLKIIDTLIDAGADALELGVPFSDPLADGPTIQNANLRAFAAGVTPTQCFEMLALIREKHPTIPIGLLMYANLVFNNGIDAFYAHCEKVGVDSVLVADVPVEESAPFRQAALRHNIAPIFICPPNADDDLLRQIASYGRGYTYLLSRSGVTGAENRGALPLHHLIEKLKEYHAAPALQGFGISSPVQVSAAVRAGAAGAISGSAIVNIIEKNHNTSPDQMLAELKSFVYAMKAASRV.

Residues Glu49 and Asp60 each act as proton acceptor in the active site.

Belongs to the TrpA family. In terms of assembly, tetramer of two alpha and two beta chains.

It catalyses the reaction (1S,2R)-1-C-(indol-3-yl)glycerol 3-phosphate + L-serine = D-glyceraldehyde 3-phosphate + L-tryptophan + H2O. The protein operates within amino-acid biosynthesis; L-tryptophan biosynthesis; L-tryptophan from chorismate: step 5/5. The alpha subunit is responsible for the aldol cleavage of indoleglycerol phosphate to indole and glyceraldehyde 3-phosphate. The protein is Tryptophan synthase alpha chain of Salmonella arizonae (strain ATCC BAA-731 / CDC346-86 / RSK2980).